The chain runs to 204 residues: Thiamine-phosphate synthase (204 aa).

4-amino-2-methyl-5-(diphosphooxymethyl)pyrimidine-binding positions include 32–36 (QLRMK) and D64. Mg(2+) is bound by residues D65 and D84. T103 is a 4-amino-2-methyl-5-(diphosphooxymethyl)pyrimidine binding site. 129–131 (TTT) provides a ligand contact to 2-[(2R,5Z)-2-carboxy-4-methylthiazol-5(2H)-ylidene]ethyl phosphate. K132 provides a ligand contact to 4-amino-2-methyl-5-(diphosphooxymethyl)pyrimidine. G165 provides a ligand contact to 2-[(2R,5Z)-2-carboxy-4-methylthiazol-5(2H)-ylidene]ethyl phosphate.

The protein belongs to the thiamine-phosphate synthase family. It depends on Mg(2+) as a cofactor.

The catalysed reaction is 2-[(2R,5Z)-2-carboxy-4-methylthiazol-5(2H)-ylidene]ethyl phosphate + 4-amino-2-methyl-5-(diphosphooxymethyl)pyrimidine + 2 H(+) = thiamine phosphate + CO2 + diphosphate. It catalyses the reaction 2-(2-carboxy-4-methylthiazol-5-yl)ethyl phosphate + 4-amino-2-methyl-5-(diphosphooxymethyl)pyrimidine + 2 H(+) = thiamine phosphate + CO2 + diphosphate. The enzyme catalyses 4-methyl-5-(2-phosphooxyethyl)-thiazole + 4-amino-2-methyl-5-(diphosphooxymethyl)pyrimidine + H(+) = thiamine phosphate + diphosphate. Its pathway is cofactor biosynthesis; thiamine diphosphate biosynthesis; thiamine phosphate from 4-amino-2-methyl-5-diphosphomethylpyrimidine and 4-methyl-5-(2-phosphoethyl)-thiazole: step 1/1. In terms of biological role, condenses 4-methyl-5-(beta-hydroxyethyl)thiazole monophosphate (THZ-P) and 2-methyl-4-amino-5-hydroxymethyl pyrimidine pyrophosphate (HMP-PP) to form thiamine monophosphate (TMP). This Bacteroides fragilis (strain YCH46) protein is Thiamine-phosphate synthase.